The following is a 274-amino-acid chain: uncharacterized protein (274 aa).

A C2 NT-type domain is found at 3–141 (IFIPKARRPT…TIRIGISLKQ (139 aa)).

It to yeast YBL086c.

This is an uncharacterized protein from Schizosaccharomyces pombe (strain 972 / ATCC 24843) (Fission yeast).